The chain runs to 470 residues: Nuclear receptor subfamily 0 group B member 1 (470 aa).

3 repeat units span residues 1 to 67, 68 to 133, and 134 to 200. The interval 1–253 is 4 X 67 AA tandem repeats; the sequence is MAGENHQWQG…RPVALKSPQV (253 aa). 3 consecutive short sequence motifs (LXXLL motif) follow at residues 13-17, 80-84, and 146-150; these read LYNML, LYSML, and LYSLL. One copy of the 4; truncated repeat lies at 201-253; sequence FCGEDHPQQGSTLYCVPTSTNQAQAAPEERPRAPWWDTSSGALRPVALKSPQV. In terms of domain architecture, NR LBD spans 205–469; that stretch reads DHPQQGSTLY…DMMLEMLCTK (265 aa). The short motif at 461–466 is the AF-2 motif element; the sequence is MMLEML.

It belongs to the nuclear hormone receptor family. NR0 subfamily. In terms of assembly, homodimer. Interacts with NR5A1, NR5A2, NR0B2 and with COPS2. Interacts with ESRRB; represses ESRRB activity at the GATA6 promoter.

Its subcellular location is the nucleus. The protein localises to the cytoplasm. Functionally, nuclear receptor that lacks a DNA-binding domain and acts as a corepressor that inhibits the transcriptional activity of other nuclear receptors through heterodimeric interactions. Component of a cascade required for the development of the hypothalamic-pituitary-adrenal-gonadal axis. May also have a role in the development of the embryo and in the maintenance of embryonic stem cell pluripotency. This Homo sapiens (Human) protein is Nuclear receptor subfamily 0 group B member 1 (NR0B1).